Reading from the N-terminus, the 496-residue chain is Xylulose kinase (496 aa).

83–84 (MH) contacts substrate. Aspartate 237 functions as the Proton acceptor in the catalytic mechanism.

Belongs to the FGGY kinase family.

It catalyses the reaction D-xylulose + ATP = D-xylulose 5-phosphate + ADP + H(+). Its function is as follows. Catalyzes the phosphorylation of D-xylulose to D-xylulose 5-phosphate. The chain is Xylulose kinase from Staphylococcus epidermidis (strain ATCC 12228 / FDA PCI 1200).